The following is a 468-amino-acid chain: Microtubule-associated tyrosine carboxypeptidase 1 (468 aa).

Residues 1 to 10 (MVLDSGTQVY) show a composition bias toward polar residues. Disordered regions lie at residues 1-39 (MVLD…PPLY) and 77-112 (MKRS…TLRP). Histidine 277 serves as a coordination point for Zn(2+). Catalysis depends on glutamate 278, which acts as the Nucleophile. The Zn(2+) site is built by histidine 282 and glutamate 313.

The protein belongs to the peptidase MATCAP family. It depends on Zn(2+) as a cofactor.

Its subcellular location is the cytoplasm. The protein resides in the cytoskeleton. It catalyses the reaction C-terminal L-alpha-aminoacyl-L-glutamyl-L-glutamyl-L-tyrosyl-[tubulin] + H2O = C-terminal L-alpha-aminoacyl-L-glutamyl-L-glutamyl-[tubulin] + L-tyrosine. It carries out the reaction C-terminal L-alpha-aminoacyl-L-glutamyl-L-glutamyl-L-phenylalanyl-[tubulin] + H2O = C-terminal L-alpha-aminoacyl-L-glutamyl-L-glutamyl-[tubulin] + L-phenylalanine. In terms of biological role, tyrosine carboxypeptidase that removes the C-terminal tyrosine residue of alpha-tubulin, thereby regulating microtubule dynamics and function. Also able to remove the C-terminal phenylalanine residue of alpha-tubulin TUBA8. Recognizes adjacent tubulin dimers along the same protofilament. This Rattus norvegicus (Rat) protein is Microtubule-associated tyrosine carboxypeptidase 1.